The following is a 428-amino-acid chain: Spliceosome RNA helicase DDX39B (428 aa).

The span at 1–19 shows a compositional bias: acidic residues; it reads MAENDVDNELLDYEEDEVE. Residues 1–32 form a disordered region; the sequence is MAENDVDNELLDYEEDEVETAAGGDGSEAPAK. N-acetylalanine is present on Ala-2. The residue at position 36 (Lys-36) is an N6-acetyllysine; alternate. Lys-36 is covalently cross-linked (Glycyl lysine isopeptide (Lys-Gly) (interchain with G-Cter in SUMO2); alternate). 2 positions are modified to phosphoserine: Ser-38 and Ser-41. Residues 45–73 carry the Q motif motif; sequence SGFRDFLLKPELLRAIVDCGFEHPSEVQH. The Helicase ATP-binding domain maps to 76 to 249; it reads IPQAILGMDV…RKFMQDPMEI (174 aa). 89–96 is an ATP binding site; it reads AKSGMGKT. Thr-172 is subject to Phosphothreonine. Positions 196-199 match the DECD box motif; the sequence is DECD. Residues 261-422 enclose the Helicase C-terminal domain; it reads GLQQYYVKLK…ELPDEIDISS (162 aa).

It belongs to the DEAD box helicase family. DECD subfamily. In terms of assembly, homodimer, and heterodimer with DDX39A. DDX39B interacts with the THO subcomplex to form the THO-DDX39B complex which multimerizes into a 28-subunit tetrameric assembly. Component of the transcription/export (TREX) complex at least composed of ALYREF/THOC4, DDX39B, SARNP/CIP29, CHTOP and the THO subcomplex; in the complex interacts with THOC2. THOC1-THOC2-THOC3-DDX39B subcomplex is sufficient for the interaction with export factor NXF1-NXT1. TREX seems to have a dynamic structure involving ATP-dependent remodeling. Within the TREX complex bridges ALYREF/THOC4 and the THO subcomplex, and, in a ATP-dependent manner, ALYREF/THOC4 and SARNP/CIP29. Component of the spliceosome. Interacts directly with U2AF2. Interacts with RBM8A, RNPS1 and SRRM1, FYTTD1/UIF, THOC1, MX1 and POLDIP3. Interacts with LUZP4. Interacts with SARNP/CIP29 (via the C-terminal domain); the interaction is direct and facilitates RNA binding of DDX39B.

It is found in the nucleus. The protein localises to the nucleus speckle. The protein resides in the cytoplasm. It catalyses the reaction ATP + H2O = ADP + phosphate + H(+). In terms of biological role, involved in nuclear export of spliced and unspliced mRNA. Component of the TREX complex which is thought to couple mRNA transcription, processing and nuclear export, and specifically associates with spliced mRNA and not with unspliced pre-mRNA. The TREX complex is recruited to spliced mRNAs by a transcription-independent mechanism, binds to mRNA upstream of the exon-junction complex (EJC) and is recruited in a splicing- and cap-dependent manner to a region near the 5' end of the mRNA where it functions in mRNA export to the cytoplasm via the TAP/NXF1 pathway. The THOC1-THOC2-THOC3 core complex alone is sufficient to promote ATPase activity of DDX39B; in the complex THOC2 is the only component that directly interacts with DDX39B. Associates with SARNP/CIP29, which facilitates RNA binding of DDX39B and likely plays a role in mRNA export. May undergo several rounds of ATP hydrolysis during assembly of TREX to drive subsequent loading of components such as ALYREF/THOC4 and CHTOP onto mRNA. Also associates with pre-mRNA independent of ALYREF/THOC4. Involved in the nuclear export of intronless mRNA; the ATP-bound form is proposed to recruit export adapter ALYREF/THOC4 to intronless mRNA; its ATPase activity is cooperatively stimulated by RNA and ALYREF/THOC4 and ATP hydrolysis is thought to trigger the dissociation from RNA to allow the association of ALYREF/THOC4 and the NXF1-NXT1 heterodimer. Involved in transcription elongation and genome stability. Functionally, splice factor that is required for the first ATP-dependent step in spliceosome assembly and for the interaction of U2 snRNP with the branchpoint. Has both RNA-stimulated ATP binding/hydrolysis activity and ATP-dependent RNA unwinding activity. Even with the stimulation of RNA, the ATPase activity is weak. Can only hydrolyze ATP but not other NTPs. The RNA stimulation of ATPase activity does not have a strong preference for the sequence and length of the RNA. However, ssRNA stimulates the ATPase activity much more strongly than dsRNA. Can unwind 5' or 3' overhangs or blunt end RNA duplexes in vitro. The ATPase and helicase activities are not influenced by U2AF2; the effect of ALYREF/THOC4 is reported conflictingly. The chain is Spliceosome RNA helicase DDX39B (DDX39B) from Canis lupus familiaris (Dog).